The sequence spans 304 residues: Probable 5-dehydro-4-deoxyglucarate dehydratase (304 aa).

The protein belongs to the DapA family.

The enzyme catalyses 5-dehydro-4-deoxy-D-glucarate + H(+) = 2,5-dioxopentanoate + CO2 + H2O. It participates in carbohydrate acid metabolism; D-glucarate degradation; 2,5-dioxopentanoate from D-glucarate: step 2/2. The polypeptide is Probable 5-dehydro-4-deoxyglucarate dehydratase (Methylobacterium radiotolerans (strain ATCC 27329 / DSM 1819 / JCM 2831 / NBRC 15690 / NCIMB 10815 / 0-1)).